Reading from the N-terminus, the 217-residue chain is ATP-dependent Clp protease proteolytic subunit (217 aa).

Serine 119 acts as the Nucleophile in catalysis. Residue histidine 144 is part of the active site.

The protein belongs to the peptidase S14 family. As to quaternary structure, fourteen ClpP subunits assemble into 2 heptameric rings which stack back to back to give a disk-like structure with a central cavity, resembling the structure of eukaryotic proteasomes.

It is found in the cytoplasm. It catalyses the reaction Hydrolysis of proteins to small peptides in the presence of ATP and magnesium. alpha-casein is the usual test substrate. In the absence of ATP, only oligopeptides shorter than five residues are hydrolyzed (such as succinyl-Leu-Tyr-|-NHMec, and Leu-Tyr-Leu-|-Tyr-Trp, in which cleavage of the -Tyr-|-Leu- and -Tyr-|-Trp bonds also occurs).. Cleaves peptides in various proteins in a process that requires ATP hydrolysis. Has a chymotrypsin-like activity. Plays a major role in the degradation of misfolded proteins. The chain is ATP-dependent Clp protease proteolytic subunit from Bordetella petrii (strain ATCC BAA-461 / DSM 12804 / CCUG 43448).